Consider the following 66-residue polypeptide: Large ribosomal subunit protein bL35 (66 aa).

Residues 1–16 are compositionally biased toward basic residues; sequence MPKQKTHRASAKRFKR. The interval 1-20 is disordered; the sequence is MPKQKTHRASAKRFKRTGSG.

Belongs to the bacterial ribosomal protein bL35 family.

This chain is Large ribosomal subunit protein bL35, found in Streptococcus thermophilus (strain ATCC BAA-250 / LMG 18311).